Here is a 74-residue protein sequence, read N- to C-terminus: Antimicrobial peptide 1 (74 aa).

Positions 1–22 (MEIKYLLTVFLVLLIGSDYCQA) are cleaved as a signal peptide. Position 40 is a lysine amide (Lys-40). Residues 46 to 74 (DLDGQIDRSRNFRKRDAELEELLSKLPIY) constitute a propeptide that is removed on maturation.

Expressed by the venom gland.

It localises to the secreted. The protein localises to the target cell membrane. Functionally, has antibacterial activity against the Gram-positive bacteria S.aureus (MIC=20 uM), the Gram-negative bacteria E.coli (MIC=150 uM), and the yeast C.albicans (MIC=64 uM). Causes hemolysis on horse erythrocytes. This Androctonus amoreuxi (African fattail scorpion) protein is Antimicrobial peptide 1.